The chain runs to 466 residues: MITLYNTLTRQKETFEPIEPGKVKMYVCGPTVYNYIHIGNARPAINYDVVRRYFEYQGYEVVFVSNFTDVDDKLIKRSKELDESVETIADRYIDAFYEDVGALNVKKATSNPRVMNHMDDIINFIKDLVDEGYAYESGGDVYFRTRKFQDYGKLSHQSLNDLKVGARIEQGEQKEDALDFTLWKQAKPGEISWESPFGEGRPGWHIECSVMAYHELGATIDIHAGGTDLQFPHHENEIAQSEAHNHAPFANYWMHNGFINIDNEKMSKSLGNFVLVHDIIKQIDPDVLRFFMISVHYRSPINYNMELVEAAKSGLERVRNSYQAIEEREAIATDIEAQSDYIAEIDKILEQFETVMNDDFNTANAITAWYDLAKLANKYVLENTTSTKVLGRFKEVYQIFSDVLGVPLKGKDSDELLDEEVEALIEERNNARKDKDFARADEIRDQLKEQNIILEDTPQGVRFKRG.

Cys-28 is a binding site for Zn(2+). The 'HIGH' region motif lies at 30–40; sequence PTVYNYIHIGN. Zn(2+)-binding residues include Cys-208, His-233, and Glu-237. Residues 265–269 carry the 'KMSKS' region motif; sequence KMSKS. Lys-268 provides a ligand contact to ATP.

Belongs to the class-I aminoacyl-tRNA synthetase family. As to quaternary structure, monomer. Requires Zn(2+) as cofactor.

It is found in the cytoplasm. It carries out the reaction tRNA(Cys) + L-cysteine + ATP = L-cysteinyl-tRNA(Cys) + AMP + diphosphate. The polypeptide is Cysteine--tRNA ligase (Staphylococcus saprophyticus subsp. saprophyticus (strain ATCC 15305 / DSM 20229 / NCIMB 8711 / NCTC 7292 / S-41)).